Reading from the N-terminus, the 358-residue chain is Tripartite motif-containing protein 54 (358 aa).

An RING-type zinc finger spans residues 26–82 (CPICLEMFSKPVVILPCQHNLCRKCANDVFQASNPLWQSRGSTTVSSGGRFRCPSCR). The segment at 121 to 163 (EQHLMCEEHEEEKINIYCLSCEVPTCSLCKVFGAHKDCEVAPL) adopts a B box-type zinc-finger fold. Zn(2+)-binding residues include cysteine 126, histidine 129, cysteine 149, and histidine 155. The tract at residues 168-211 (KRQKSELSDGIAMLVAGNDRVQAVITQMEEVCQTIEDNSRRQKQ) is mediates microtubule-binding and homooligomerization. The stretch at 194 to 258 (QMEEVCQTIE…LIRQYGDHLE (65 aa)) forms a coiled coil. The 59-residue stretch at 271–329 (MEEPQMALYLQQAKELINKVGAMSKVELAGRPEPGYESMEQFTVSVEHVAEMLRTIDFQ) folds into the COS domain. Positions 326–358 (IDFQPGASGEEEEVAPDGDEGSAGQEEERPDGP) are disordered. Over residues 334 to 345 (GEEEEVAPDGDE) the composition is skewed to acidic residues.

As to quaternary structure, homooligomer and heterooligomer. Interacts with TRIM63 and probably with TRIM55. Interacts with tubulin.

The protein resides in the cytoplasm. The protein localises to the cytoskeleton. It localises to the myofibril. Its subcellular location is the sarcomere. It is found in the z line. In terms of biological role, may bind and stabilize microtubules during myotubes formation. This chain is Tripartite motif-containing protein 54 (TRIM54), found in Pongo abelii (Sumatran orangutan).